The primary structure comprises 81 residues: Photosystem I iron-sulfur center (81 aa).

2 4Fe-4S ferredoxin-type domains span residues 2–31 (SHSV…MVPW) and 37–68 (GQIA…VRVY). Residues Cys11, Cys14, Cys17, Cys21, Cys48, Cys51, Cys54, and Cys58 each coordinate [4Fe-4S] cluster.

As to quaternary structure, the cyanobacterial PSI reaction center is composed of one copy each of PsaA,B,C,D,E,F,I,J,K,L,M and X, and forms trimeric complexes. Requires [4Fe-4S] cluster as cofactor.

The protein resides in the cellular thylakoid membrane. It carries out the reaction reduced [plastocyanin] + hnu + oxidized [2Fe-2S]-[ferredoxin] = oxidized [plastocyanin] + reduced [2Fe-2S]-[ferredoxin]. Its function is as follows. Apoprotein for the two 4Fe-4S centers FA and FB of photosystem I (PSI); essential for photochemical activity. FB is the terminal electron acceptor of PSI, donating electrons to ferredoxin. The C-terminus interacts with PsaA/B/D and helps assemble the protein into the PSI complex. Required for binding of PsaD and PsaE to PSI. PSI is a plastocyanin/cytochrome c6-ferredoxin oxidoreductase, converting photonic excitation into a charge separation, which transfers an electron from the donor P700 chlorophyll pair to the spectroscopically characterized acceptors A0, A1, FX, FA and FB in turn. This chain is Photosystem I iron-sulfur center, found in Trichodesmium erythraeum (strain IMS101).